We begin with the raw amino-acid sequence, 489 residues long: Hyaluronoglucuronidase (489 aa).

Glutamate 176 serves as the catalytic Proton donor. Glutamate 290 (nucleophile) is an active-site residue.

The protein belongs to the glycosyl hydrolase 79 family.

It carries out the reaction Random hydrolysis of (1-&gt;3)-linkages between beta-D-glucuronate and N-acetyl-D-glucosamine residues in hyaluronate.. Hyaluronidase activity is inhibited by Mn(2+), Cu(2+) and Fe(3+). Functionally, hyaluronidase that mediates hydrolysis of (1-&gt;3)-linkages between beta-D-glucuronate and N-acetyl-D-glucosamine residues in hyaluronate. Very specific to hyaluronate: not able to hydrolyze chitin, heparin or chondroitin sulfate. In Hirudo nipponia (Korean blood-sucking leech), this protein is Hyaluronoglucuronidase.